Consider the following 443-residue polypeptide: MPFVPHSPEDVSVMLDAIGVNTIEDLFADIPAEMRPKSFALPKGLSEMDVCSRLEALSARNRTDVVSFLGAGFYDHHIPKAVDALSSRGEFYTAYTPYQPEAAQGTLQAIFEFQTAVCRLLDMDCANASVYDGGSALFEAMMMAVRATRRRKLVIDEALSPIYRTMLASYTSNLQLELVTVPHRDGLPDMDALKASVDDTCAAVVVQNPNFFGAITDFTDLFTHARAHKALGVISVYPVMQSVLKTPGEMGADIAVADGQSIGQPLSFGGPYLGIMTCTKPLVRQIPGRIVGRTQDVDGRTGYVLTLQAREQHIRRAKATSNICSNQALCALRSLIHLTLLGPEGLVRTAELSMERARYAAERLTALPGVELLHDAPFGNEFAVRLPVSAFEVVDRLTARGYVPGFPVGRYYPGMDNVLLVACTEKHSFEQVGILAEMLGGIL.

This sequence belongs to the GcvP family. N-terminal subunit subfamily. As to quaternary structure, the glycine cleavage system is composed of four proteins: P, T, L and H. In this organism, the P 'protein' is a heterodimer of two subunits.

It carries out the reaction N(6)-[(R)-lipoyl]-L-lysyl-[glycine-cleavage complex H protein] + glycine + H(+) = N(6)-[(R)-S(8)-aminomethyldihydrolipoyl]-L-lysyl-[glycine-cleavage complex H protein] + CO2. The glycine cleavage system catalyzes the degradation of glycine. The P protein binds the alpha-amino group of glycine through its pyridoxal phosphate cofactor; CO(2) is released and the remaining methylamine moiety is then transferred to the lipoamide cofactor of the H protein. This chain is Probable glycine dehydrogenase (decarboxylating) subunit 1, found in Nitratidesulfovibrio vulgaris (strain DP4) (Desulfovibrio vulgaris).